A 196-amino-acid chain; its full sequence is Probable GTP-binding protein EngB (196 aa).

In terms of domain architecture, EngB-type G spans 22–196; it reads NLPEIALSGR…GNWIEEKISK (175 aa). GTP contacts are provided by residues 30 to 37, 57 to 61, 75 to 78, 142 to 145, and 175 to 177; these read GRSNVGKS, GKTQT, DVPG, TKID, and FSS. Mg(2+)-binding residues include Ser37 and Thr59.

This sequence belongs to the TRAFAC class TrmE-Era-EngA-EngB-Septin-like GTPase superfamily. EngB GTPase family. Mg(2+) serves as cofactor.

Necessary for normal cell division and for the maintenance of normal septation. The polypeptide is Probable GTP-binding protein EngB (Lactobacillus helveticus (strain DPC 4571)).